The following is a 566-amino-acid chain: Glutamate--tRNA ligase (566 aa).

The 'HIGH' region motif lies at 105–115 (PNPDGPIHLGN).

It belongs to the class-I aminoacyl-tRNA synthetase family. Glutamate--tRNA ligase type 2 subfamily.

It localises to the cytoplasm. The enzyme catalyses tRNA(Glu) + L-glutamate + ATP = L-glutamyl-tRNA(Glu) + AMP + diphosphate. Functionally, catalyzes the attachment of glutamate to tRNA(Glu) in a two-step reaction: glutamate is first activated by ATP to form Glu-AMP and then transferred to the acceptor end of tRNA(Glu). The polypeptide is Glutamate--tRNA ligase (Sulfurisphaera tokodaii (strain DSM 16993 / JCM 10545 / NBRC 100140 / 7) (Sulfolobus tokodaii)).